Here is a 269-residue protein sequence, read N- to C-terminus: Formamidopyrimidine-DNA glycosylase (269 aa).

Residue proline 2 is the Schiff-base intermediate with DNA of the active site. Glutamate 3 functions as the Proton donor in the catalytic mechanism. Lysine 57 (proton donor; for beta-elimination activity) is an active-site residue. Residues histidine 90, arginine 109, and lysine 150 each contribute to the DNA site. The segment at 235–269 (QVYGRAGEPCRQCGHPIEIAKHGQRSTFFCRHCQH) adopts an FPG-type zinc-finger fold. The active-site Proton donor; for delta-elimination activity is arginine 259.

Belongs to the FPG family. As to quaternary structure, monomer. Requires Zn(2+) as cofactor.

It catalyses the reaction Hydrolysis of DNA containing ring-opened 7-methylguanine residues, releasing 2,6-diamino-4-hydroxy-5-(N-methyl)formamidopyrimidine.. The enzyme catalyses 2'-deoxyribonucleotide-(2'-deoxyribose 5'-phosphate)-2'-deoxyribonucleotide-DNA = a 3'-end 2'-deoxyribonucleotide-(2,3-dehydro-2,3-deoxyribose 5'-phosphate)-DNA + a 5'-end 5'-phospho-2'-deoxyribonucleoside-DNA + H(+). Functionally, involved in base excision repair of DNA damaged by oxidation or by mutagenic agents. Acts as a DNA glycosylase that recognizes and removes damaged bases. Has a preference for oxidized purines, such as 7,8-dihydro-8-oxoguanine (8-oxoG). Has AP (apurinic/apyrimidinic) lyase activity and introduces nicks in the DNA strand. Cleaves the DNA backbone by beta-delta elimination to generate a single-strand break at the site of the removed base with both 3'- and 5'-phosphates. This chain is Formamidopyrimidine-DNA glycosylase, found in Yersinia pseudotuberculosis serotype O:1b (strain IP 31758).